A 350-amino-acid chain; its full sequence is Eukaryotic translation initiation factor 3 subunit I (350 aa).

6 WD repeats span residues 8–49 (GHER…GTLE), 51–89 (HQGV…CVYT), 91–135 (DSPS…ATLS), 149–188 (SEGS…LVTS), 198–240 (EKNV…KVYK), and 296–335 (GHFG…QDFL).

Belongs to the eIF-3 subunit I family. As to quaternary structure, component of the eukaryotic translation initiation factor 3 (eIF-3) complex.

It localises to the cytoplasm. In terms of biological role, component of the eukaryotic translation initiation factor 3 (eIF-3) complex, which is involved in protein synthesis of a specialized repertoire of mRNAs and, together with other initiation factors, stimulates binding of mRNA and methionyl-tRNAi to the 40S ribosome. The eIF-3 complex specifically targets and initiates translation of a subset of mRNAs involved in cell proliferation. This chain is Eukaryotic translation initiation factor 3 subunit I, found in Candida albicans (strain SC5314 / ATCC MYA-2876) (Yeast).